The primary structure comprises 756 residues: Hyperosmolality-gated Ca2+ permeable channel 1.5 (756 aa).

The next 10 membrane-spanning stretches (helical) occupy residues 7 to 27 (IGVA…AFAI), 101 to 121 (IYLL…TVMV), 154 to 174 (SRFW…CFVL), 373 to 393 (LVIA…IAFV), 425 to 445 (FLPG…LMLM), 465 to 485 (YYMF…TALQ), 510 to 530 (ATFF…GEIL), 574 to 594 (FILG…ILVF), 628 to 648 (VVIA…TKKA), and 651 to 671 (STPL…FCQG). Positions 731–756 (PDKTPDLVATKRGSRRFNSGSAETFT) are disordered. The span at 746–756 (RFNSGSAETFT) shows a compositional bias: polar residues.

This sequence belongs to the CSC1 (TC 1.A.17) family.

It is found in the membrane. Acts as an osmosensitive calcium-permeable cation channel. This Arabidopsis thaliana (Mouse-ear cress) protein is Hyperosmolality-gated Ca2+ permeable channel 1.5.